Reading from the N-terminus, the 403-residue chain is Synaptotagmin-7 (403 aa).

Residues 1 to 16 (MYRDPEAASPGAPTRD) are Vesicular-facing. The chain crosses the membrane as a helical span at residues 17 to 37 (VLLVSAIITVSLSVTIVLCGL). Residues 38-403 (CHWCQRKLGK…PVAQWHQLKA (366 aa)) lie on the Cytoplasmic side of the membrane. Ser52 bears the Phosphoserine mark. The interval 53–103 (LETVGTPDSGRGRGEKKAIKLPAGGKAVNTAPVPGQTPHDESDRRTETRSS) is disordered. Residue Thr58 is modified to Phosphothreonine. Residue Ser61 is modified to Phosphoserine. Residues 90 to 100 (PHDESDRRTET) show a composition bias toward basic and acidic residues. Ser119 and Ser122 each carry phosphoserine. C2 domains lie at 135-255 (NLGR…TFWK) and 266-399 (SRGE…AQWH). Asp166 is a binding site for Ca(2+). Asymmetric dimethylarginine is present on residues Gly169 and Ser171. Asp172, Asp225, Asp227, Ser230, Asp233, Asp297, Asp303, Asp357, Asp359, Ser362, and Asp365 together coordinate Ca(2+).

Belongs to the synaptotagmin family. As to quaternary structure, homodimer. Can also form heterodimers with SYT6, SYT9 and SYT10. Interacts with calmodulin (CALM1, CALM2 or CALM3). Interacts with CD63; required for localization to lysosomes. Interacts with APP. Ca(2+) serves as cofactor. Palmitoylated at its vesicular N-terminus; palmitoylation is required for localization to lysosome and phagocytosis in macrophages. As to expression, widely expressed. Expressed in insulin-secreting cells. Present in glucagon-secreting cells (at protein level).

Its subcellular location is the cell membrane. The protein localises to the presynaptic cell membrane. It is found in the cytoplasmic vesicle. The protein resides in the secretory vesicle. It localises to the synaptic vesicle membrane. Its subcellular location is the lysosome membrane. The protein localises to the phagosome membrane. It is found in the peroxisome membrane. The protein resides in the secretory vesicle membrane. Functionally, ca(2+) sensor involved in Ca(2+)-dependent exocytosis of secretory and synaptic vesicles through Ca(2+) and phospholipid binding to the C2 domain. Ca(2+) induces binding of the C2-domains to phospholipid membranes and to assembled SNARE-complexes; both actions contribute to triggering exocytosis. SYT7 binds Ca(2+) with high affinity and slow kinetics compared to other synaptotagmins. Involved in Ca(2+)-triggered lysosomal exocytosis, a major component of the plasma membrane repair. Ca(2+)-regulated delivery of lysosomal membranes to the cell surface is also involved in the phagocytic uptake of particles by macrophages. Ca(2+)-triggered lysosomal exocytosis also plays a role in bone remodeling by regulating secretory pathways in osteoclasts and osteoblasts. Involved in cholesterol transport from lysosome to peroxisome by promoting membrane contacts between lysosomes and peroxisomes: probably acts by promoting vesicle fusion by binding phosphatidylinositol-4,5-bisphosphate on peroxisomal membranes. Acts as a key mediator of synaptic facilitation, a process also named short-term synaptic potentiation: synaptic facilitation takes place at synapses with a low initial release probability and is caused by influx of Ca(2+) into the axon terminal after spike generation, increasing the release probability of neurotransmitters. Probably mediates synaptic facilitation by directly increasing the probability of release. May also contribute to synaptic facilitation by regulating synaptic vesicle replenishment, a process required to ensure that synaptic vesicles are ready for the arrival of the next action potential: SYT7 is required for synaptic vesicle replenishment by acting as a sensor for Ca(2+) and by forming a complex with calmodulin. Also acts as a regulator of Ca(2+)-dependent insulin and glucagon secretion in beta-cells. Triggers exocytosis by promoting fusion pore opening and fusion pore expansion in chromaffin cells. Also regulates the secretion of some non-synaptic secretory granules of specialized cells. The sequence is that of Synaptotagmin-7 from Mus musculus (Mouse).